A 436-amino-acid polypeptide reads, in one-letter code: Gamma-glutamyl phosphate reductase (436 aa).

It belongs to the gamma-glutamyl phosphate reductase family.

It localises to the cytoplasm. It carries out the reaction L-glutamate 5-semialdehyde + phosphate + NADP(+) = L-glutamyl 5-phosphate + NADPH + H(+). It participates in amino-acid biosynthesis; L-proline biosynthesis; L-glutamate 5-semialdehyde from L-glutamate: step 2/2. Its function is as follows. Catalyzes the NADPH-dependent reduction of L-glutamate 5-phosphate into L-glutamate 5-semialdehyde and phosphate. The product spontaneously undergoes cyclization to form 1-pyrroline-5-carboxylate. The protein is Gamma-glutamyl phosphate reductase of Salinibacter ruber (strain DSM 13855 / M31).